The primary structure comprises 195 residues: PRELI domain containing protein 3B (195 aa).

In terms of domain architecture, PRELI/MSF1 spans 1-172 (MKIWTSEHVF…VIHKLNAEIE (172 aa)). Phosphoserine is present on residues S46 and S51.

Belongs to the slowmo family.

The polypeptide is PRELI domain containing protein 3B (Prelid3b) (Mus musculus (Mouse)).